We begin with the raw amino-acid sequence, 335 residues long: Urokinase plasminogen activator surface receptor (335 aa).

Residues 1–22 form the signal peptide; it reads MGHPPLLPLLLLLHTCVPASWG. UPAR/Ly6 domains are found at residues 23 to 114, 115 to 213, and 214 to 305; these read LRCM…RSRY, LECI…PQNG, and RQCY…YRSG. 3 disulfide bridges follow: Cys25–Cys46, Cys28–Cys34, and Cys39–Cys67. The N-linked (GlcNAc...) asparagine glycan is linked to Asn74. 11 disulfides stabilise this stretch: Cys93–Cys98, Cys117–Cys144, Cys120–Cys127, Cys137–Cys169, Cys175–Cys192, Cys193–Cys198, Cys216–Cys244, Cys219–Cys227, Cys237–Cys263, Cys269–Cys287, and Cys288–Cys293. Asn124 carries N-linked (GlcNAc...) asparagine glycosylation. N-linked (GlcNAc...) asparagine glycans are attached at residues Asn184, Asn194, Asn222, and Asn255. A lipid anchor (GPI-anchor amidated glycine) is attached at Gly305. A propeptide spans 306–335 (removed in mature form); the sequence is AAPQPGPAHLSLTITLLMTARLWGGTLLWT.

In terms of assembly, monomer. Interacts (via the UPAR/Ly6 domains) with SRPX2. Interacts with MRC2. Interacts with FAP (seprase); the interaction occurs at the cell surface of invadopodia membrane. Interacts with SORL1 (via N-terminal ectodomain); this interaction decreases PLAUR internalization. The ternary complex composed of PLAUR-PLAU-SERPINE1 also interacts with SORL1. Interacts with CD82; this interaction prevents PLAUR from binding to its high affinity ligand PLAU.

Its subcellular location is the cell membrane. The protein localises to the cell projection. The protein resides in the invadopodium membrane. Functionally, acts as a receptor for urokinase plasminogen activator. Plays a role in localizing and promoting plasmin formation. Mediates the proteolysis-independent signal transduction activation effects of U-PA. It is subject to negative-feedback regulation by U-PA which cleaves it into an inactive form. This is Urokinase plasminogen activator surface receptor (PLAUR) from Pan troglodytes (Chimpanzee).